The following is a 729-amino-acid chain: Glycine--tRNA ligase, mitochondrial 1 (729 aa).

N-acetylmethionine is present on methionine 1. The transit peptide at 1 to 28 (MRIFSTFVFHRRQQIFNLRQFQTTTILR) directs the protein to the mitochondrion. Residues 50–106 (SLSEKSSSVEAQGNAVRALKASRAAKPEIDAAIEQLNKLKLEKSTVEKELQSIISSS) form the WHEP-TRS domain. Glutamate 296 serves as a coordination point for glycine. ATP-binding positions include 328–330 (RNE) and 339–340 (RV). Glutamate 347 lines the glycine pocket. 454–455 (EC) contacts ATP. Residue 575 to 577 (EPS) coordinates glycine. Residue arginine 582 coordinates ATP.

This sequence belongs to the class-II aminoacyl-tRNA synthetase family. Homodimer.

The protein resides in the mitochondrion. The protein localises to the cytoplasm. Its subcellular location is the cytosol. The enzyme catalyses tRNA(Gly) + glycine + ATP = glycyl-tRNA(Gly) + AMP + diphosphate. It catalyses the reaction 2 ATP + H(+) = P(1),P(4)-bis(5'-adenosyl) tetraphosphate + diphosphate. Its function is as follows. Catalyzes the ATP-dependent ligation of glycine to the 3'-end of its cognate tRNA, via the formation of an aminoacyl-adenylate intermediate (Gly-AMP). Also produces diadenosine tetraphosphate (Ap4A), a universal pleiotropic signaling molecule needed for cell regulation pathways, by direct condensation of 2 ATPs. Thereby, may play a special role in Ap4A homeostasis. In Arabidopsis thaliana (Mouse-ear cress), this protein is Glycine--tRNA ligase, mitochondrial 1.